A 192-amino-acid chain; its full sequence is Adenylate kinase (192 aa).

10 to 18 (GVPGVGKTT) provides a ligand contact to ATP.

It belongs to the archaeal adenylate kinase family.

It localises to the cytoplasm. It carries out the reaction AMP + ATP = 2 ADP. This Methanoculleus marisnigri (strain ATCC 35101 / DSM 1498 / JR1) protein is Adenylate kinase.